A 362-amino-acid polypeptide reads, in one-letter code: Chorismate synthase (362 aa).

Arg47 contacts NADP(+). FMN contacts are provided by residues 124–126, Gly286, 301–305, and Arg327; these read RSS and KPTAT.

This sequence belongs to the chorismate synthase family. In terms of assembly, homotetramer. The cofactor is FMNH2.

The enzyme catalyses 5-O-(1-carboxyvinyl)-3-phosphoshikimate = chorismate + phosphate. It participates in metabolic intermediate biosynthesis; chorismate biosynthesis; chorismate from D-erythrose 4-phosphate and phosphoenolpyruvate: step 7/7. In terms of biological role, catalyzes the anti-1,4-elimination of the C-3 phosphate and the C-6 proR hydrogen from 5-enolpyruvylshikimate-3-phosphate (EPSP) to yield chorismate, which is the branch point compound that serves as the starting substrate for the three terminal pathways of aromatic amino acid biosynthesis. This reaction introduces a second double bond into the aromatic ring system. The chain is Chorismate synthase from Synechococcus elongatus (strain ATCC 33912 / PCC 7942 / FACHB-805) (Anacystis nidulans R2).